The primary structure comprises 1407 residues: DNA-directed RNA polymerase subunit beta' (1407 aa).

Zn(2+) is bound by residues C70, C72, C85, and C88. Residues D458, D460, and D462 each coordinate Mg(2+). 4 residues coordinate Zn(2+): C814, C888, C895, and C898.

The protein belongs to the RNA polymerase beta' chain family. As to quaternary structure, the RNAP catalytic core consists of 2 alpha, 1 beta, 1 beta' and 1 omega subunit. When a sigma factor is associated with the core the holoenzyme is formed, which can initiate transcription. Mg(2+) is required as a cofactor. Requires Zn(2+) as cofactor.

The enzyme catalyses RNA(n) + a ribonucleoside 5'-triphosphate = RNA(n+1) + diphosphate. In terms of biological role, DNA-dependent RNA polymerase catalyzes the transcription of DNA into RNA using the four ribonucleoside triphosphates as substrates. In Leptothrix cholodnii (strain ATCC 51168 / LMG 8142 / SP-6) (Leptothrix discophora (strain SP-6)), this protein is DNA-directed RNA polymerase subunit beta'.